The following is a 474-amino-acid chain: MKIENRRKGSCTTVLVGRKASIDGSTMIARNDDGHEALDPQRFIVIQPEEQPRHYKAVLSDLELDLPENPLRYTSTPNAVLKEGIWPAAGINSANVAMSATETITTNPRILGLDPYVENGMGEEDLVTLVLPYIKSAREGVERLGQLLKTYGTYEPNGIAFADKEEVWWLETIGGHHWAAVRIPDDSYVVAPNRMNIDEFKFDNDDYMCSSDLKQLIDANHLNPDFEGYESHYNLRHIFGSSSIKDSVYNNPRTWYGQNFLGNPSEDPQNQELPFICEASRKITVEDVKFVLSSHFENTKYDPYGSTNSPEERKLFRPIGINRNHSVHILQVRNNVPDELAGVQWLAFGANTFNHVVPFYTAINDTPASYRDAKGEYDPTNMYWLSATTAVLGDSNYDLFVDLRNTFELNTMAKFHEIQNETDKNFETAEDKIAYLTQANEKLAEAAFKAQTELLGRMVVLGSANMKLRFDFND.

The active site involves Cys11.

The protein belongs to the peptidase C69 family.

The catalysed reaction is an L-aminoacyl-L-amino acid + H2O = 2 an L-alpha-amino acid. In Lactococcus lactis subsp. lactis (strain IL1403) (Streptococcus lactis), this protein is Probable dipeptidase B (pepDB).